Here is a 103-residue protein sequence, read N- to C-terminus: Large ribosomal subunit protein bL21 (103 aa).

This sequence belongs to the bacterial ribosomal protein bL21 family. As to quaternary structure, part of the 50S ribosomal subunit. Contacts protein L20.

Its function is as follows. This protein binds to 23S rRNA in the presence of protein L20. The polypeptide is Large ribosomal subunit protein bL21 (Actinobacillus succinogenes (strain ATCC 55618 / DSM 22257 / CCUG 43843 / 130Z)).